The sequence spans 152 residues: SMN complex subunit smn1 (152 aa).

Residues 26–51 (KKYHSIEAKGGVSDPDSRLDGEKLIS) form an interacts with yip11/gem2 region. The segment at 88–110 (DNKGLSDEKPETRAAETHQEFME) is disordered. The segment covering 91–108 (GLSDEKPETRAAETHQEF) has biased composition (basic and acidic residues). The tract at residues 130-152 (SWYYAGYYTGLAEGLAKSEQRKD) is may interact with gem8.

This sequence belongs to the SMN family. In terms of assembly, homooligomer; may form homodimers and homotetramers. Part of the core SMN complex at least composed of smn1, yip11/gem2, gem6, gem7 and gem8. Part of the SMN-Sm complex. Interacts with yip11/gem2; the interaction is direct. Interacts with gem8; the interaction is direct. Interacts with proteins of the Sm complex, including smn1, smb1, smd1, smd2 and smd3.

The protein localises to the nucleus. In terms of biological role, the SMN complex catalyzes the assembly of small nuclear ribonucleoproteins (snRNPs), the building blocks of the spliceosome, and thereby plays an important role in the splicing of cellular pre-mRNAs. Most spliceosomal snRNPs contain a common set of Sm proteins smb1, smd1, smd2, smd3, sme1, smf1 and smg1 that assemble in a heptameric protein ring on the Sm site of the small nuclear RNA to form the core snRNP (Sm core). In the cytosol, the Sm proteins smd1, smd2, sme1, smf1 and smg1 (5Sm) are trapped in an inactive 6S pICln-Sm complex by the chaperone saf5 that controls the assembly of the core snRNP. To assemble core snRNPs, the SMN complex accepts the trapped 5Sm proteins from saf5 forming an intermediate. Binding of snRNA inside 5Sm triggers eviction of the SMN complex, thereby allowing binding of smd3 and smb1 to complete assembly of the core snRNP. Within the SMN complex, smn1 acts as a structural backbone and together with yip11/gem2 it gathers the Sm complex subunits. The protein is SMN complex subunit smn1 of Schizosaccharomyces pombe (strain 972 / ATCC 24843) (Fission yeast).